Consider the following 437-residue polypeptide: MGTKELHIVMYPWLAFGHFIPYLHLSNKLAQKGHKITFLLPHRAKLQLDSQNLYPSLITLVPITVPQVDTLPLGAESTADIPLSQHGDLSIAMDRTRPEIESILSKLDPKPDLIFFDMAQWVPVIASKLGIKSVSYNIVCAISLDLVRDWYKKDDGSNVPSWTLKHDKSSHFGENISILERALIALGTPDAIGIRSCREIEGEYCDSIAERFKKPVLLSGTTLPEPSDDPLDPKWVKWLGKFEEGSVIFCCLGSQHVLDKPQLQELALGLEMTGLPFFLAIKPPLGYATLDEVLPEGFSERVRDRGVAHGGWVQQPQMLAHPSVGCFLCHCGSSSMWEALVSDTQLVLFPQIPDQALNAVLMADKLKVGVKVEREDDGGVSKEVWSRAIKSVMDKESEIAAEVKKNHTKWRDMLINEEFVNGYIDSFIKDLQDLVEK.

Residue His-18 is the Proton acceptor of the active site. Asp-117 serves as the catalytic Charge relay. The UDP site is built by Ser-254, Trp-312, Val-313, His-330, Ser-335, and Glu-338.

It belongs to the UDP-glycosyltransferase family. In terms of tissue distribution, mainly expressed in flowers, flower buds and young leaves, and, to a lesser extent, in old leaves, stems and roots.

Its pathway is secondary metabolite biosynthesis; terpenoid biosynthesis. In terms of biological role, component of the oleanane-type triterpene saponins (e.g. saponarioside A and saponarioside B) biosynthetic pathway, leading to the production of natural products with detergent properties used as traditional sources of soap. A glycosyltransferase that mediates the conversion of QA-triFR to QA-triFRX via the elongation of the C-28 sugar chain with a D-xylose. The polypeptide is UDP-glucosyl transferase 79L3 (Saponaria officinalis (Common soapwort)).